A 488-amino-acid polypeptide reads, in one-letter code: ATP-dependent RNA helicase dbp3 (488 aa).

Positions M1–T29 are enriched in basic and acidic residues. Positions M1–D42 are disordered. Residues G92–Q100 carry the Q motif motif. A Helicase ATP-binding domain is found at W104–V279. Residue A117 to T124 coordinates ATP. The DEAD box motif lies at D226–D229. The Helicase C-terminal domain occupies E306–G457.

This sequence belongs to the DEAD box helicase family. DDX5/DBP2 subfamily.

Its subcellular location is the nucleus. It localises to the nucleolus. It carries out the reaction ATP + H2O = ADP + phosphate + H(+). Functionally, ATP-dependent RNA helicase required for 60S ribosomal subunit synthesis. Involved in efficient pre-rRNA processing, predominantly at site A3, which is necessary for the normal formation of 25S and 5.8S rRNAs. This is ATP-dependent RNA helicase dbp3 (dbp3) from Emericella nidulans (strain FGSC A4 / ATCC 38163 / CBS 112.46 / NRRL 194 / M139) (Aspergillus nidulans).